Here is a 432-residue protein sequence, read N- to C-terminus: Adenylosuccinate synthetase (432 aa).

Residues 13–19 and 41–43 each bind GTP; these read GDEGKGK and GHT. The active-site Proton acceptor is the Asp14. Mg(2+)-binding residues include Asp14 and Gly41. IMP-binding positions include 14–17, 39–42, Thr130, Arg144, Gln225, Thr240, and Arg304; these read DEGK and NAGH. His42 acts as the Proton donor in catalysis. 300–306 contacts substrate; sequence ATTGRPR. GTP-binding positions include Arg306, 332–334, and 415–417; these read KLD and STG.

This sequence belongs to the adenylosuccinate synthetase family. In terms of assembly, homodimer. Mg(2+) is required as a cofactor.

It is found in the cytoplasm. It catalyses the reaction IMP + L-aspartate + GTP = N(6)-(1,2-dicarboxyethyl)-AMP + GDP + phosphate + 2 H(+). Its pathway is purine metabolism; AMP biosynthesis via de novo pathway; AMP from IMP: step 1/2. Plays an important role in the de novo pathway of purine nucleotide biosynthesis. Catalyzes the first committed step in the biosynthesis of AMP from IMP. The chain is Adenylosuccinate synthetase from Hahella chejuensis (strain KCTC 2396).